A 347-amino-acid polypeptide reads, in one-letter code: Oocyte-specific homeobox protein 6 (347 aa).

Disordered stretches follow at residues 1 to 20 (MLQY…HSKF) and 54 to 86 (PRSP…IQMQ). Residues 72-85 (QESQGPSGKSSIQM) show a composition bias toward polar residues. The homeobox DNA-binding region spans 145–204 (HRKIRTVYTEEQKCVLKKHFHKCTYPSREQRMALAVLVGVTANEIQIWFKNHRAKSKRES).

This sequence belongs to the paired homeobox family. Obox subfamily. Specifically expressed in early embryos.

The protein localises to the nucleus. Its function is as follows. Transcription factor required for zygotic genome activation (ZGA), a critical event in early embryonic development during which the developmental control passes from maternally provided mRNAs to the expression of the zygotic genome after fertilization. The sequence is that of Oocyte-specific homeobox protein 6 from Mus musculus (Mouse).